We begin with the raw amino-acid sequence, 512 residues long: MNNHYHPTGHRDAKTYAGDRPWPQWPGVPSGLSSSSGLLQNRYYAPAGPFPLLPYFGELGAGPDTAMNQAKRQRAEVSYQQPRPYPTGRGTGSMGYQSKVRVTDKYKVVGFISSGTYGRVYKALGRHGQPGEFAIKKFKPDKEGEQASYTGISQSAVREMALCSELHHPNVIRLVEIILEDKCIFMVFEYAEHDLLQIIHHHTQQPRHPIPPNTIKSIMFQLLNGCQYLHTNWVLHRDLKPANIMVTSSGEVKIGDLGLARLSYKPLHSLYGGDKVVVTIWYRAPELLLGSRHYTPAIDMWALGCIFAELLSLRPIFKGEEAKMDSKKTVPFQRNQMQKIVDIMGLPTKERWPLLTSTTEYSQLSTLQPPIHHGGHHGHHYQSQRQAAAANAGVSHLEKWYYNTINQQTGGSGPGSGTSPLASLGAEGYKLLAGLLEYDPQRRLTAAAALQHPFFSTGDPVSANCFEGLKTEYPHRRVSQDDNDIRTSSLPGTKRSGLPDDSLRPGKRVKEG.

2 disordered regions span residues 1–22 and 75–94; these read MNNHYHPTGHRDAKTYAGDRPW and AEVSYQQPRPYPTGRGTGSM. In terms of domain architecture, Protein kinase spans 106–455; the sequence is YKVVGFISSG…AAAALQHPFF (350 aa). ATP is bound by residues 112 to 120 and Lys-136; that span reads ISSGTYGRV. Catalysis depends on Asp-238, which acts as the Proton acceptor. Disordered stretches follow at residues 368–388 and 476–512; these read QPPIHHGGHHGHHYQSQRQAA and RRVSQDDNDIRTSSLPGTKRSGLPDDSLRPGKRVKEG. Over residues 373–382 the composition is skewed to basic residues; that stretch reads HGGHHGHHYQ. 2 stretches are compositionally biased toward basic and acidic residues: residues 476–485 and 497–512; these read RRVSQDDNDI and GLPDDSLRPGKRVKEG.

The protein belongs to the protein kinase superfamily. CMGC Ser/Thr protein kinase family. CDC2/CDKX subfamily. Component of the SRB8-11 complex, a regulatory module of the Mediator complex. The cofactor is Mg(2+).

The protein localises to the nucleus. The enzyme catalyses L-seryl-[protein] + ATP = O-phospho-L-seryl-[protein] + ADP + H(+). The catalysed reaction is L-threonyl-[protein] + ATP = O-phospho-L-threonyl-[protein] + ADP + H(+). It catalyses the reaction [DNA-directed RNA polymerase] + ATP = phospho-[DNA-directed RNA polymerase] + ADP + H(+). Its function is as follows. Component of the SRB8-11 complex. The SRB8-11 complex is a regulatory module of the Mediator complex which is itself involved in regulation of basal and activated RNA polymerase II-dependent transcription. The SRB8-11 complex may be involved in the transcriptional repression of a subset of genes regulated by Mediator. It may inhibit the association of the Mediator complex with RNA polymerase II to form the holoenzyme complex. The SRB8-11 complex phosphorylates the C-terminal domain (CTD) of the largest subunit of RNA polymerase II. The sequence is that of Serine/threonine-protein kinase SSN3 (SSN3) from Chaetomium globosum (strain ATCC 6205 / CBS 148.51 / DSM 1962 / NBRC 6347 / NRRL 1970) (Soil fungus).